A 104-amino-acid polypeptide reads, in one-letter code: ATP-dependent Clp protease adapter protein ClpS (104 aa).

The disordered stretch occupies residues 1 to 20 (MSPDPHEDLGDVLTEPTQKT).

This sequence belongs to the ClpS family. As to quaternary structure, binds to the N-terminal domain of the chaperone ClpA.

Its function is as follows. Involved in the modulation of the specificity of the ClpAP-mediated ATP-dependent protein degradation. This chain is ATP-dependent Clp protease adapter protein ClpS, found in Desulfatibacillum aliphaticivorans.